The sequence spans 422 residues: Dihydroorotase (422 aa).

2 residues coordinate Zn(2+): H61 and H63. Residues 63–65 (HLR) and N95 contribute to the substrate site. Zn(2+) is bound at residue D153. N278 is a substrate binding site. D305 contributes to the Zn(2+) binding site. D305 is a catalytic residue. Substrate-binding positions include H309 and 322 to 323 (PG).

It belongs to the metallo-dependent hydrolases superfamily. DHOase family. Class I DHOase subfamily. As to quaternary structure, monomer. Forms a 1:1 stoichiometric complex with PyrB. The complex exists as an equilibrium mixture of heterohexamers, composed of 3 PyrC and 3 PyrB subunits, and dodecamers. The complex has both DHOase and ATCase activities. Zn(2+) serves as cofactor.

The catalysed reaction is (S)-dihydroorotate + H2O = N-carbamoyl-L-aspartate + H(+). The protein operates within pyrimidine metabolism; UMP biosynthesis via de novo pathway; (S)-dihydroorotate from bicarbonate: step 3/3. The monomer has very low activity by itself. Activated several thousandfold by formation of a complex with PyrB aspartate carbamoyltransferase (ATCase). In terms of biological role, catalyzes the reversible cyclization of carbamoyl aspartate to dihydroorotate. The polypeptide is Dihydroorotase (Aquifex aeolicus (strain VF5)).